Here is a 365-residue protein sequence, read N- to C-terminus: Protein BZR1 homolog 2 (365 aa).

A compositionally biased stretch (gly residues) spans 1–30; it reads MATGGGGGGGGMGGGGVGGGAGAAGVGVGG. 4 disordered regions span residues 1 to 45, 113 to 154, 191 to 236, and 344 to 365; these read MATG…KRRE, SPSP…NMAN, SAPV…TPPS, and HEDS…RAAA. The segment at 31–113 is required for DNA-binding; it reads RMPTWREREN…RMEVIGCSVS (83 aa). Over residues 113–144 the composition is skewed to low complexity; sequence SPSPCSSYQPSPRASYNASPTSSSFPSGASSP. Composition is skewed to polar residues over residues 215-233 and 356-365; these read SNVQ…VNST and LGSSRTRAAA.

The protein belongs to the BZR/LAT61 family. In terms of assembly, interacts with PUB24.

In terms of biological role, may function in brassinosteroid signaling. The protein is Protein BZR1 homolog 2 of Oryza sativa subsp. japonica (Rice).